The following is a 342-amino-acid chain: Tetraacyldisaccharide 4'-kinase (342 aa).

Residue 68 to 75 coordinates ATP; that stretch reads TVGGTGKT.

It belongs to the LpxK family.

It catalyses the reaction a lipid A disaccharide + ATP = a lipid IVA + ADP + H(+). It functions in the pathway glycolipid biosynthesis; lipid IV(A) biosynthesis; lipid IV(A) from (3R)-3-hydroxytetradecanoyl-[acyl-carrier-protein] and UDP-N-acetyl-alpha-D-glucosamine: step 6/6. Transfers the gamma-phosphate of ATP to the 4'-position of a tetraacyldisaccharide 1-phosphate intermediate (termed DS-1-P) to form tetraacyldisaccharide 1,4'-bis-phosphate (lipid IVA). The protein is Tetraacyldisaccharide 4'-kinase of Burkholderia lata (strain ATCC 17760 / DSM 23089 / LMG 22485 / NCIMB 9086 / R18194 / 383).